The following is a 375-amino-acid chain: Lipid-A-disaccharide synthase (375 aa).

The protein belongs to the LpxB family.

It carries out the reaction a lipid X + a UDP-2-N,3-O-bis[(3R)-3-hydroxyacyl]-alpha-D-glucosamine = a lipid A disaccharide + UDP + H(+). It functions in the pathway bacterial outer membrane biogenesis; LPS lipid A biosynthesis. Its function is as follows. Condensation of UDP-2,3-diacylglucosamine and 2,3-diacylglucosamine-1-phosphate to form lipid A disaccharide, a precursor of lipid A, a phosphorylated glycolipid that anchors the lipopolysaccharide to the outer membrane of the cell. The polypeptide is Lipid-A-disaccharide synthase (Pseudomonas entomophila (strain L48)).